The sequence spans 429 residues: MRTELNQGLIDFLKASPTPFHACASLAQRLESAGYQRLDEREPWPTQSGGRYYVTRNDSSLIAIQLGRRSPLEGGLRLVGAHTDSPCLRVKPQPELNRQGFWQLGVEVYGGALLAPWFDRDLSLAGRVTFRRAGRVESQLIDFKQPIAVIPNLAIHLNREANQGWAINAQNELPPILAQVAGDERGDFRALLAEQLQREHEINADVVLDFELCFYDTQSAALIGLNQDFIAGARLDNLLSCHAGLQALLAAGDRESCVLVCTDHEEIGSCSTCGADGPFLEQVLGRLLPDGDAFVRIMQQSLLVSADNAHGVHPNYADRHDANHGPKLNAGPVIKVNSNQRYATNSETAGFFRHLCFDVEVPVQSFVVRSDMGCGSTIGPITASRLGMRTVDIGLPTFAMHSIRELAGSHDLTHLVKVLTAFYSSPLLP.

Residues H82, H156, and H401 each contribute to the Zn(2+) site.

Belongs to the peptidase M18 family. The cofactor is Zn(2+).

In Azotobacter vinelandii (strain DJ / ATCC BAA-1303), this protein is Probable M18 family aminopeptidase 2.